Reading from the N-terminus, the 207-residue chain is LexA repressor (207 aa).

The segment at residues 28–48 (VREIGEAVGLASSSTVHGHLS) is a DNA-binding region (H-T-H motif). Active-site for autocatalytic cleavage activity residues include S130 and K168.

The protein belongs to the peptidase S24 family. Homodimer.

It catalyses the reaction Hydrolysis of Ala-|-Gly bond in repressor LexA.. Represses a number of genes involved in the response to DNA damage (SOS response), including recA and lexA. In the presence of single-stranded DNA, RecA interacts with LexA causing an autocatalytic cleavage which disrupts the DNA-binding part of LexA, leading to derepression of the SOS regulon and eventually DNA repair. In Staphylococcus aureus (strain MSSA476), this protein is LexA repressor.